We begin with the raw amino-acid sequence, 310 residues long: Methionyl-tRNA formyltransferase (310 aa).

Residue Ser110–Pro113 coordinates (6S)-5,6,7,8-tetrahydrofolate.

This sequence belongs to the Fmt family.

The catalysed reaction is L-methionyl-tRNA(fMet) + (6R)-10-formyltetrahydrofolate = N-formyl-L-methionyl-tRNA(fMet) + (6S)-5,6,7,8-tetrahydrofolate + H(+). Its function is as follows. Attaches a formyl group to the free amino group of methionyl-tRNA(fMet). The formyl group appears to play a dual role in the initiator identity of N-formylmethionyl-tRNA by promoting its recognition by IF2 and preventing the misappropriation of this tRNA by the elongation apparatus. The sequence is that of Methionyl-tRNA formyltransferase from Streptomyces avermitilis (strain ATCC 31267 / DSM 46492 / JCM 5070 / NBRC 14893 / NCIMB 12804 / NRRL 8165 / MA-4680).